The chain runs to 274 residues: 2,3,4,5-tetrahydropyridine-2,6-dicarboxylate N-succinyltransferase (274 aa).

Residues R104 and D141 each coordinate substrate.

It belongs to the transferase hexapeptide repeat family. Homotrimer.

The protein localises to the cytoplasm. It carries out the reaction (S)-2,3,4,5-tetrahydrodipicolinate + succinyl-CoA + H2O = (S)-2-succinylamino-6-oxoheptanedioate + CoA. Its pathway is amino-acid biosynthesis; L-lysine biosynthesis via DAP pathway; LL-2,6-diaminopimelate from (S)-tetrahydrodipicolinate (succinylase route): step 1/3. This is 2,3,4,5-tetrahydropyridine-2,6-dicarboxylate N-succinyltransferase from Escherichia coli O127:H6 (strain E2348/69 / EPEC).